A 146-amino-acid chain; its full sequence is Hemoglobin subunit beta-1/2 (146 aa).

V1 is subject to N-acetylvaline. Residues 2 to 146 (HLTPDEKNAV…VATALAHKYH (145 aa)) form the Globin domain. S44 carries the phosphoserine modification. An N6-acetyllysine modification is found at K59. H63 and H92 together coordinate heme b. C93 bears the S-nitrosocysteine mark. An N6-acetyllysine modification is found at K144.

The protein belongs to the globin family. As to quaternary structure, heterotetramer of two alpha chains and two beta chains. Red blood cells.

In terms of biological role, involved in oxygen transport from the lung to the various peripheral tissues. The polypeptide is Hemoglobin subunit beta-1/2 (HBB) (Otolemur crassicaudatus (Brown greater galago)).